Consider the following 367-residue polypeptide: Spermidine/putrescine import ATP-binding protein PotA (367 aa).

An ABC transporter domain is found at 10–240 (IEFKNVSLDY…PINHFVANFI (231 aa)). 42–49 (GPSGSGKS) lines the ATP pocket.

Belongs to the ABC transporter superfamily. Spermidine/putrescine importer (TC 3.A.1.11.1) family. The complex is composed of two ATP-binding proteins (PotA), two transmembrane proteins (PotB and PotC) and a solute-binding protein (PotD).

The protein localises to the cell membrane. The enzyme catalyses ATP + H2O + polyamine-[polyamine-binding protein]Side 1 = ADP + phosphate + polyamineSide 2 + [polyamine-binding protein]Side 1.. Its function is as follows. Part of the ABC transporter complex PotABCD involved in spermidine/putrescine import. Responsible for energy coupling to the transport system. This Oenococcus oeni (strain ATCC BAA-331 / PSU-1) protein is Spermidine/putrescine import ATP-binding protein PotA.